Consider the following 39-residue polypeptide: U2-ctenitoxin-Co1a (39 aa).

In terms of processing, disulfide bonds are present. In terms of tissue distribution, expressed by the venom gland.

It is found in the secreted. In terms of biological role, omega-agatoxins are antagonists of voltage-gated calcium channels (Cav). The sequence is that of U2-ctenitoxin-Co1a from Ctenus ornatus (Brazilian spider).